A 600-amino-acid chain; its full sequence is Pyranose dehydrogenase 3 (600 aa).

Residues 1–25 (MLPRVARLNTHLVSLALLGFQITYG) form the signal peptide. N-linked (GlcNAc...) asparagine glycans are attached at residues Asn99 and Asn114. His127 carries the post-translational modification Tele-8alpha-FAD histidine. Asn173, Asn199, Asn275, Asn342, Asn399, and Asn507 each carry an N-linked (GlcNAc...) asparagine glycan. His535 acts as the Proton acceptor in catalysis. Asn546 is a glycosylation site (N-linked (GlcNAc...) asparagine). The active site involves His579.

The protein belongs to the GMC oxidoreductase family. In terms of assembly, monomer. It depends on FAD as a cofactor. N-glycosylated.

It is found in the secreted. It carries out the reaction pyranose + acceptor = pyranos-2-ulose + reduced acceptor.. The enzyme catalyses pyranose + acceptor = pyranos-3-ulose + reduced acceptor.. The catalysed reaction is pyranose + acceptor = pyranos-2,3-diulose + reduced acceptor.. It catalyses the reaction a pyranoside + acceptor = a pyranosid-3-ulose + reduced acceptor.. It carries out the reaction a pyranoside + acceptor = a pyranosid-3,4-diulose + reduced acceptor.. Catalyzes the single-oxidation or sequential double oxidation reaction of carbohydrates primarily at carbon-2 and/or carbon-3 with the concomitant reduction of the flavin. The enzyme exhibits a broad sugar substrate specificity, oxidizing different aldopyranoses to the corresponding C-1, C-2, C-3 or C-1,2, C-2,3 and C-3,4 (di)dehydro sugars with substrate-specific regioselectivity. Accepts only a narrow range of electron acceptors such as substituted benzoquinones and complexed metal ions and reacts extremely slowly with O(2) as acceptor. May play a role in the natural recycling of plant matter by oxidizing all major monosaccharides in lignocellulose and by reducing quinone compounds or reactive radical species generated during lignin depolymerization. This chain is Pyranose dehydrogenase 3, found in Leucoagaricus meleagris (Western flat-topped agaric).